A 301-amino-acid polypeptide reads, in one-letter code: Oxygen-dependent coproporphyrinogen-III oxidase (301 aa).

Substrate is bound at residue S90. Positions 94 and 104 each coordinate a divalent metal cation. H104 (proton donor) is an active-site residue. 106–108 (NVR) provides a ligand contact to substrate. 2 residues coordinate a divalent metal cation: H143 and H173. Residues 238 to 273 (YVEFNLVWDRGTLFGLQSGGRTESILMSLPPVVKWR) are important for dimerization. A substrate-binding site is contributed by 256–258 (GGR).

The protein belongs to the aerobic coproporphyrinogen-III oxidase family. In terms of assembly, homodimer. Requires a divalent metal cation as cofactor.

The protein resides in the cytoplasm. The enzyme catalyses coproporphyrinogen III + O2 + 2 H(+) = protoporphyrinogen IX + 2 CO2 + 2 H2O. It participates in porphyrin-containing compound metabolism; protoporphyrin-IX biosynthesis; protoporphyrinogen-IX from coproporphyrinogen-III (O2 route): step 1/1. In terms of biological role, involved in the heme biosynthesis. Catalyzes the aerobic oxidative decarboxylation of propionate groups of rings A and B of coproporphyrinogen-III to yield the vinyl groups in protoporphyrinogen-IX. In Nitrosomonas europaea (strain ATCC 19718 / CIP 103999 / KCTC 2705 / NBRC 14298), this protein is Oxygen-dependent coproporphyrinogen-III oxidase.